Here is a 667-residue protein sequence, read N- to C-terminus: Putative L-type lectin-domain containing receptor kinase I.4 (667 aa).

An N-terminal signal peptide occupies residues M1–G21. The Extracellular segment spans residues Q22–P294. A legume-lectin like region spans residues E24 to S257. Residues N55, N110, N124, N128, N181, N204, and N225 are each glycosylated (N-linked (GlcNAc...) asparagine). The chain crosses the membrane as a helical span at residues L295–Y315. Over W316 to R667 the chain is Cytoplasmic. The region spanning F350–P625 is the Protein kinase domain. Residues V356–V364 and K378 contribute to the ATP site. Residue D474 is the Proton acceptor of the active site.

The protein in the C-terminal section; belongs to the protein kinase superfamily. Ser/Thr protein kinase family. In the N-terminal section; belongs to the leguminous lectin family.

Its subcellular location is the cell membrane. It carries out the reaction L-seryl-[protein] + ATP = O-phospho-L-seryl-[protein] + ADP + H(+). It catalyses the reaction L-threonyl-[protein] + ATP = O-phospho-L-threonyl-[protein] + ADP + H(+). The polypeptide is Putative L-type lectin-domain containing receptor kinase I.4 (LECRK14) (Arabidopsis thaliana (Mouse-ear cress)).